Here is a 724-residue protein sequence, read N- to C-terminus: Protein-glutamine gamma-glutamyltransferase 5 (724 aa).

Residue Ala-2 is modified to N-acetylalanine. Active-site residues include Cys-283, His-342, and Asp-365. Ca(2+)-binding residues include Asn-405, Asp-407, Glu-453, and Glu-458. Composition is skewed to polar residues over residues 473–486 (RSQGPHQANSNPFS) and 495–505 (ARSPDSPSLQP). Positions 473–505 (RSQGPHQANSNPFSSVPPRHNSARSPDSPSLQP) are disordered.

The protein belongs to the transglutaminase superfamily. Transglutaminase family. Requires Ca(2+) as cofactor.

The protein resides in the cytoplasm. The enzyme catalyses L-glutaminyl-[protein] + L-lysyl-[protein] = [protein]-L-lysyl-N(6)-5-L-glutamyl-[protein] + NH4(+). Functionally, catalyzes the cross-linking of proteins and the conjugation of polyamines to proteins. Contributes to the formation of the cornified cell envelope of keratinocytes. In Mus musculus (Mouse), this protein is Protein-glutamine gamma-glutamyltransferase 5 (Tgm5).